Reading from the N-terminus, the 308-residue chain is C-4 methylsterol oxidase (308 aa).

The helical transmembrane segment at 56–76 threads the bilayer; it reads LLFFLTHEIFYFGRCLPWAII. The region spanning 145–282 is the Fatty acid hydroxylase domain; sequence WAVFFVLEDT…FRWWDFILDT (138 aa). The short motif at 160–164 is the Histidine box-1 element; that stretch reads HRGLH. The Histidine box-2 signature appears at 173–177; that stretch reads HKQHH. Residues 257 to 263 carry the Histidine box-3 motif; the sequence is HHDEHHH.

Belongs to the sterol desaturase family. Requires Fe cation as cofactor.

Its subcellular location is the endoplasmic reticulum membrane. It carries out the reaction 4,4-dimethyl-5alpha-cholest-7-en-3beta-ol + 6 Fe(II)-[cytochrome b5] + 3 O2 + 5 H(+) = 4alpha-carboxy-4beta-methyl-5alpha-cholest-7-ene-3beta-ol + 6 Fe(III)-[cytochrome b5] + 4 H2O. It participates in steroid biosynthesis; zymosterol biosynthesis; zymosterol from lanosterol: step 3/6. Its function is as follows. C-4 methylsterol oxidase; part of the third module of ergosterol biosynthesis pathway that includes the late steps of the pathway. ERG25 is a catalytic component of the C-4 demethylation complex that catalyzes the conversion of 4,4-dimethylfecosterol into fecosterol via 4-methylfecosterol. Catalyzes the three-step monooxygenation required for the demethylation of 4,4-dimethyl and 4alpha-methylsterols. The third module or late pathway involves the ergosterol synthesis itself through consecutive reactions that mainly occur in the endoplasmic reticulum (ER) membrane. Firstly, the squalene synthase ERG9 catalyzes the condensation of 2 farnesyl pyrophosphate moieties to form squalene, which is the precursor of all steroids. Squalene synthase is crucial for balancing the incorporation of farnesyl diphosphate (FPP) into sterol and nonsterol isoprene synthesis. Secondly, the squalene epoxidase ERG1 catalyzes the stereospecific oxidation of squalene to (S)-2,3-epoxysqualene, which is considered to be a rate-limiting enzyme in steroid biosynthesis. Then, the lanosterol synthase ERG7 catalyzes the cyclization of (S)-2,3 oxidosqualene to lanosterol, a reaction that forms the sterol core. In the next steps, lanosterol is transformed to zymosterol through a complex process involving various demethylation, reduction and desaturation reactions. The lanosterol 14-alpha-demethylase ERG11 (also known as CYP51) catalyzes C14-demethylation of lanosterol to produce 4,4'-dimethyl cholesta-8,14,24-triene-3-beta-ol, which is critical for ergosterol biosynthesis. The C-14 reductase ERG24 reduces the C14=C15 double bond of 4,4-dimethyl-cholesta-8,14,24-trienol to produce 4,4-dimethyl-cholesta-8,24-dienol. 4,4-dimethyl-cholesta-8,24-dienol is substrate of the C-4 demethylation complex ERG25-ERG26-ERG27 in which ERG25 catalyzes the three-step monooxygenation required for the demethylation of 4,4-dimethyl and 4alpha-methylsterols, ERG26 catalyzes the oxidative decarboxylation that results in a reduction of the 3-beta-hydroxy group at the C-3 carbon to an oxo group, and ERG27 is responsible for the reduction of the keto group on the C-3. ERG28 has a role as a scaffold to help anchor ERG25, ERG26 and ERG27 to the endoplasmic reticulum and ERG29 regulates the activity of the iron-containing C4-methylsterol oxidase ERG25. Then, the sterol 24-C-methyltransferase ERG6 catalyzes the methyl transfer from S-adenosyl-methionine to the C-24 of zymosterol to form fecosterol. The C-8 sterol isomerase ERG2 catalyzes the reaction which results in unsaturation at C-7 in the B ring of sterols and thus converts fecosterol to episterol. The sterol-C5-desaturase ERG3 then catalyzes the introduction of a C-5 double bond in the B ring to produce 5-dehydroepisterol. The C-22 sterol desaturase ERG5 further converts 5-dehydroepisterol into ergosta-5,7,22,24(28)-tetraen-3beta-ol by forming the C-22(23) double bond in the sterol side chain. Finally, ergosta-5,7,22,24(28)-tetraen-3beta-ol is substrate of the C-24(28) sterol reductase ERG4 to produce ergosterol. The protein is C-4 methylsterol oxidase of Candida albicans (strain SC5314 / ATCC MYA-2876) (Yeast).